A 901-amino-acid chain; its full sequence is Probable dipeptidyl-aminopeptidase B (901 aa).

A compositionally biased stretch (low complexity) spans 1 to 22 (MSSPRPSTSSTSSDSGLSVDTT). The segment at 1–67 (MSSPRPSTSS…EPFLPSAKKQ (67 aa)) is disordered. Residues 1 to 76 (MSSPRPSTSS…QAASGSRTSR (76 aa)) lie on the Cytoplasmic side of the membrane. A helical; Signal-anchor for type II membrane protein transmembrane segment spans residues 77–97 (LIWGLVILCVAGWLWGLVLFV). Over 98–901 (TQNRSAQQSV…VKRSLPMLVK (804 aa)) the chain is Vacuolar. N-linked (GlcNAc...) asparagine glycans are attached at residues Asn334 and Asn625. Catalysis depends on Ser739, which acts as the Charge relay system. N-linked (GlcNAc...) asparagine glycosylation is present at Asn793. Catalysis depends on charge relay system residues Asp816 and His849.

Belongs to the peptidase S9B family.

The protein resides in the vacuole membrane. It catalyses the reaction Release of an N-terminal dipeptide, Xaa-Yaa-|-Zaa-, from a polypeptide, preferentially when Yaa is Pro, provided Zaa is neither Pro nor hydroxyproline.. Type IV dipeptidyl-peptidase which removes N-terminal dipeptides sequentially from polypeptides having unsubstituted N-termini provided that the penultimate residue is proline. The sequence is that of Probable dipeptidyl-aminopeptidase B (dapB) from Aspergillus niger (strain ATCC MYA-4892 / CBS 513.88 / FGSC A1513).